Here is a 373-residue protein sequence, read N- to C-terminus: Glutamate 5-kinase (373 aa).

An ATP-binding site is contributed by Lys15. Residues Ser55, Asp142, and Asn154 each contribute to the substrate site. Residues 174–175 and 216–222 each bind ATP; these read TD and TGGMVTK. In terms of domain architecture, PUA spans 281–359; the sequence is SGKIIVDDGA…GEIEAILGYK (79 aa).

The protein belongs to the glutamate 5-kinase family.

It localises to the cytoplasm. It catalyses the reaction L-glutamate + ATP = L-glutamyl 5-phosphate + ADP. It functions in the pathway amino-acid biosynthesis; L-proline biosynthesis; L-glutamate 5-semialdehyde from L-glutamate: step 1/2. Catalyzes the transfer of a phosphate group to glutamate to form L-glutamate 5-phosphate. The chain is Glutamate 5-kinase from Geobacter sulfurreducens (strain ATCC 51573 / DSM 12127 / PCA).